A 93-amino-acid chain; its full sequence is DNA-directed RNA polymerase subunit omega (93 aa).

Belongs to the RNA polymerase subunit omega family. The RNAP catalytic core consists of 2 alpha, 1 beta, 1 beta' and 1 omega subunit. When a sigma factor is associated with the core the holoenzyme is formed, which can initiate transcription.

The enzyme catalyses RNA(n) + a ribonucleoside 5'-triphosphate = RNA(n+1) + diphosphate. Promotes RNA polymerase assembly. Latches the N- and C-terminal regions of the beta' subunit thereby facilitating its interaction with the beta and alpha subunits. The polypeptide is DNA-directed RNA polymerase subunit omega (Corynebacterium urealyticum (strain ATCC 43042 / DSM 7109)).